The following is a 937-amino-acid chain: Diacylglycerol kinase theta (937 aa).

Residues 1-48 (MATAAESGARTWPGSGSPRLGSPAGSPVLGISGRARPGSGPERTGRAI) form a disordered region. Ser22 and Ser26 each carry phosphoserine. 3 consecutive Phorbol-ester/DAG-type zinc fingers follow at residues 54–102 (GHSF…KTPC), 115–162 (AHCF…CSDC), and 177–228 (HHHW…TPEC). Residues 359 to 378 (GKAGTTEEETSKDSGPGDSV) form a disordered region. Positions 390 to 489 (TQEILKIYPD…TRFYVAEARA (100 aa)) constitute a Ras-associating domain. 2 consecutive short sequence motifs (LXXLL motif) follow at residues 550–554 (LYMLA) and 569–573 (LPDVL). In terms of domain architecture, DAGKc spans 579 to 716 (PDCCPLLVFV…MDRWTILLDA (138 aa)). The interval 911–937 (AKQKPRKAGAIRDTRVDTLPAPEGNPL) is disordered.

The protein belongs to the eukaryotic diacylglycerol kinase family. Interacts with RHOA (constitutively activated, GTP-bound); the interaction inhibits DGKQ. Interacts with PRKCE. Interacts with PRKCH. Interacts with PLCB1. Interacts with NR5A1; the interaction requires both LXXLL motifs in DGKQ and is required for full phosphatidic acid-mediated activation of NR5A1. Post-translationally, phosphorylated by PRKCE and PRKCH in vitro. In terms of tissue distribution, widely expressed with higher expression in the brain and, to a lesser extent, in the small intestine, duodenum, and liver. In brain, expressed in gray matter. Expression is most intense in the cerebellar cortex and hippocampus, while moderate expression is seen in the olfactory bulb neuronal layers and brain stem nuclei. In the cerebellar cortex, equally expressed in both the Purkinje cell somata and the granule cells.

It localises to the cytoplasm. The protein resides in the cytosol. The protein localises to the cell membrane. It is found in the synapse. Its subcellular location is the cytoskeleton. It localises to the nucleus. The protein resides in the nucleus speckle. The protein localises to the nucleus matrix. The catalysed reaction is a 1,2-diacyl-sn-glycerol + ATP = a 1,2-diacyl-sn-glycero-3-phosphate + ADP + H(+). The enzyme catalyses a 1-O-alkyl-sn-glycerol + ATP = a 1-O-alkyl-sn-glycero-3-phosphate + ADP + H(+). It carries out the reaction 1-O-alkyl-2-acyl-sn-glycerol + ATP = 1-O-alkyl-2-acyl-sn-glycero-3-phosphate + ADP + H(+). It catalyses the reaction 1,2-di-(9Z-octadecenoyl)-sn-glycerol + ATP = 1,2-di-(9Z-octadecenoyl)-sn-glycero-3-phosphate + ADP + H(+). The catalysed reaction is 1-O-hexadecyl-sn-glycerol + ATP = 1-O-hexadecyl-sn-glycero-3-phosphate + ADP + H(+). The enzyme catalyses 1-O-hexadecyl-2-acetyl-sn-glycerol + ATP = 1-O-hexadecyl-2-acetyl-sn-glycero-3-phosphate + ADP + H(+). It carries out the reaction 1-octadecanoyl-2-(5Z,8Z,11Z,14Z-eicosatetraenoyl)-sn-glycerol + ATP = 1-octadecanoyl-2-(5Z,8Z,11Z,14Z-eicosatetraenoyl)-sn-glycero-3-phosphate + ADP + H(+). Its pathway is lipid metabolism; glycerolipid metabolism. Its activity is regulated as follows. Activated by phosphatidylserine. Its function is as follows. Diacylglycerol kinase that converts diacylglycerol/DAG into phosphatidic acid/phosphatidate/PA and regulates the respective levels of these two bioactive lipids. Thereby, acts as a central switch between the signaling pathways activated by these second messengers with different cellular targets and opposite effects in numerous biological processes. Within the adrenocorticotropic hormone signaling pathway, produces phosphatidic acid which in turn activates NR5A1 and subsequent steroidogenic gene transcription. Also functions downstream of the nerve growth factor signaling pathway being specifically activated in the nucleus by the growth factor. Through its diacylglycerol activity also regulates synaptic vesicle endocytosis. This is Diacylglycerol kinase theta from Rattus norvegicus (Rat).